The chain runs to 437 residues: Pterin deaminase (437 aa).

2 residues coordinate a divalent metal cation: His-80 and His-82. Lys-85 provides a ligand contact to substrate. His-231 provides a ligand contact to a divalent metal cation. The active-site Proton donor is the Glu-234. Residue Asp-331 coordinates a divalent metal cation. 331–332 (DN) contributes to the substrate binding site.

It belongs to the metallo-dependent hydrolases superfamily. Pterin deaminase family. A divalent metal cation serves as cofactor.

It catalyses the reaction a 2-amino-4-hydroxypteridine + H2O + H(+) = a 2,4-dihydroxypteridine + NH4(+). The catalysed reaction is L-sepiapterin + H2O + H(+) = (S)-xanthopterin-B2 + NH4(+). Catalyzes the deamination of many pterin metabolites, such as formylpterin, pterin-6-carboxylate, pterin-7-carboxylate, pterin, hydroxymethylpterin, biopterin, D-(+)-neopterin, isoxanthopterin, sepiapterin, folate, xanthopterin, and 7,8-dihydrohydroxymethylpterin. May be involved in a degradative pathway for catabolizing pterin rings. This chain is Pterin deaminase, found in Rhizobium rhizogenes (strain K84 / ATCC BAA-868) (Agrobacterium radiobacter).